The following is a 275-amino-acid chain: Methylglyoxal reductase DkgA (275 aa).

Tyrosine 51 acts as the Proton donor in catalysis. Histidine 107 provides a ligand contact to substrate. 187–241 (SPLAQGGKGVFDQKVIRDLADKYGKTPAQIVIRWHLDSGLVVIPKSVTPSRIAEN) is a binding site for NADP(+).

It belongs to the aldo/keto reductase family. As to quaternary structure, monomer.

Its subcellular location is the cytoplasm. The enzyme catalyses hydroxyacetone + NADP(+) = methylglyoxal + NADPH + H(+). Aldo-keto reductase that significantly contributes to cellular methylglyoxal detoxification by catalyzing the NADPH-dependent conversion of methylglyoxal to acetol. In Escherichia coli O157:H7, this protein is Methylglyoxal reductase DkgA.